Here is a 359-residue protein sequence, read N- to C-terminus: Molybdenum import ATP-binding protein ModC (359 aa).

One can recognise an ABC transporter domain in the interval 1 to 233; sequence MSGLTVSIRG…IDAESEGGGV (233 aa). 32 to 39 lines the ATP pocket; it reads GHSGAGKT. The Mop domain occupies 289-355; it reads AISIRNLLPV…VKAVSVDRAA (67 aa).

Belongs to the ABC transporter superfamily. Molybdate importer (TC 3.A.1.8) family. As to quaternary structure, the complex is composed of two ATP-binding proteins (ModC), two transmembrane proteins (ModB) and a solute-binding protein (ModA).

The protein localises to the cell inner membrane. The enzyme catalyses molybdate(out) + ATP + H2O = molybdate(in) + ADP + phosphate + H(+). Part of the ABC transporter complex ModABC involved in molybdenum import. Responsible for energy coupling to the transport system. This chain is Molybdenum import ATP-binding protein ModC, found in Brucella suis biovar 1 (strain 1330).